A 225-amino-acid chain; its full sequence is 7-cyano-7-deazaguanine synthase (225 aa).

ATP is bound at residue 7–17 (LSGGMDSTTLL). Positions 183, 191, 194, and 197 each coordinate Zn(2+).

Belongs to the QueC family. In terms of assembly, homodimer. It depends on Zn(2+) as a cofactor.

The catalysed reaction is 7-carboxy-7-deazaguanine + NH4(+) + ATP = 7-cyano-7-deazaguanine + ADP + phosphate + H2O + H(+). The protein operates within purine metabolism; 7-cyano-7-deazaguanine biosynthesis. Catalyzes the ATP-dependent conversion of 7-carboxy-7-deazaguanine (CDG) to 7-cyano-7-deazaguanine (preQ(0)). The sequence is that of 7-cyano-7-deazaguanine synthase from Caldicellulosiruptor saccharolyticus (strain ATCC 43494 / DSM 8903 / Tp8T 6331).